The following is a 189-amino-acid chain: High affinity copper uptake protein 1 (189 aa).

Over 1-67 (MDHSAHMGMS…AGLVINTAGE (67 aa)) the chain is Extracellular. The short motif at 13–18 (MGMSDM) is the Methionine segments (Mets) motif element. The disordered stretch occupies residues 15–36 (MSDMNHSTTMPPSHHHPTSSGS). Residues 20–36 (HSTTMPPSHHHPTSSGS) are compositionally biased toward low complexity. Residues 68 to 88 (MAGAFVAVFLLAMFYEGLKIA) form a helical membrane-spanning segment. At 89–131 (REGLLRKSQVSIRYNSMPVPGPNGTILMETHKTVGQQMLSFPH) the chain is on the cytoplasmic side. At threonine 113 the chain carries Phosphothreonine. A helical membrane pass occupies residues 132–152 (LLQTVLHIIQVVISYFLMLIF). Residues 153 to 155 (MTY) are Extracellular-facing. Residues 156-176 (NGYLCIAVAAGAGTGYFLFSW) traverse the membrane as a helical segment. Topologically, residues 177-189 (KKAVVVDITEHCH) are cytoplasmic. Cysteine 188 is subject to Cysteine sulfenic acid (-SOH).

Belongs to the copper transporter (Ctr) (TC 1.A.56) family. SLC31A subfamily. As to quaternary structure, homotrimer; is stabilized by cisplatin via interactions between cisplatin and the methionine-rich clusters, and could be crucial for the copper(2+) reduction process and copper(1+) stabilization. Heterotrimer between SLC31A1, CCS and SOD1; this heterotrimer is copper(1+)-mediated and its maintenance is regulated through SOD1 activation. Interacts with KDR; this interaction is induced upon VEGFA stimulation leading to SLC31A1 and KDR subsequent co-internalization to early endosomes, thereby activating KDR downstream signaling in endothelial cells. Interacts (via C-terminal domain) with ATOX1 (via dimer form); this interaction improves ATOX1 stability and controls intracellular copper(1+) levels. Interacts with SLC31A2; this interaction stabilizes SLC31A2 and protects its from ubiquitination and degradation. Interacts (via C-terminal domain) with CCS; this interaction is copper(1+)-mediated. Proteolytic cleavage, leading to a truncated form, is facilitated by SLC31A2 and initiated preferentially by CTSL and to a minor extend by CTSB in endolysosomal compartments. A post-CTSL/cathepsin L processing occurs to yield to the fully truncated form. In terms of processing, sulfenylated at Cys-188 after stimulation with VEGFA, which induces SLC31A1-KDR disulfide bond formation and their co-internalization to early endosomes, driving to a sustained VEGFR2 signaling.

It is found in the cell membrane. The protein localises to the early endosome membrane. The protein resides in the recycling endosome membrane. It localises to the apical cell membrane. Its subcellular location is the late endosome membrane. It is found in the basolateral cell membrane. It carries out the reaction Ag(+)(out) = Ag(+)(in). The enzyme catalyses Cu(+)(out) = Cu(+)(in). In terms of biological role, uniporter that mediates the transport of copper(1+) from the extracellular space to the cytoplasm, across the plasma membrane and delivers directly copper(1+) to specific chaperone such as ATOX1, via a copper(1+)- mediated transient interaction between the C-terminal domain and a copper(1+) chaperone, thus controlling intracellular copper(1+) levels. May function in copper(1+) import from the apical membrane thus may drive intestinal copper absorption. The copper(1+) transport mechanism is sodium-independent, saturable and of high-affinity. Also mediates the uptake of silver(1+). May function in the influx of the platinum-containing chemotherapeutic agents. The platinum-containing chemotherapeutic agents uptake is saturable. In vitro, mediates the transport of cadmium(2+) into cells. Also participates in the first step of copper(2+) acquisition by cells through a direct transfer of copper(2+) from copper(2+) carriers in blood, such as ALB to the N-terminal domain of SLC31A1, leading to copper(2+) reduction and probably followed by copper(1+) stabilization. In addition, functions as a redox sensor to promote angiogenesis in endothelial cells, in a copper(1+) transport independent manner, by transmitting the VEGF-induced ROS signal through a sulfenylation at Cys-189 leadin g to a subsequent disulfide bond formation between SLC31A1 and KDR. The SLC31A1-KDR complex is then co-internalized to early endosomes, driving a sustained VEGFR2 signaling. Its function is as follows. Mobilizes copper(1+) out of the endosomal compartment, making copper(1+) available for export out of the cells. This is High affinity copper uptake protein 1 from Sus scrofa (Pig).